Consider the following 98-residue polypeptide: Cell division topological specificity factor (98 aa).

Belongs to the MinE family.

In terms of biological role, prevents the cell division inhibition by proteins MinC and MinD at internal division sites while permitting inhibition at polar sites. This ensures cell division at the proper site by restricting the formation of a division septum at the midpoint of the long axis of the cell. This chain is Cell division topological specificity factor, found in Methylorubrum populi (strain ATCC BAA-705 / NCIMB 13946 / BJ001) (Methylobacterium populi).